Consider the following 463-residue polypeptide: Argininosuccinate lyase (463 aa).

This sequence belongs to the lyase 1 family. Argininosuccinate lyase subfamily.

It is found in the cytoplasm. It carries out the reaction 2-(N(omega)-L-arginino)succinate = fumarate + L-arginine. Its pathway is amino-acid biosynthesis; L-arginine biosynthesis; L-arginine from L-ornithine and carbamoyl phosphate: step 3/3. The sequence is that of Argininosuccinate lyase from Chlorobaculum tepidum (strain ATCC 49652 / DSM 12025 / NBRC 103806 / TLS) (Chlorobium tepidum).